Reading from the N-terminus, the 65-residue chain is Large ribosomal subunit protein bL28 (65 aa).

The disordered stretch occupies residues 1–21; that stretch reads MPGRDQLTGQKALSGNKRSHA.

The protein belongs to the bacterial ribosomal protein bL28 family.

The polypeptide is Large ribosomal subunit protein bL28 (Metamycoplasma arthritidis (strain 158L3-1) (Mycoplasma arthritidis)).